The sequence spans 845 residues: Tyrosine-protein phosphatase corkscrew (845 aa).

SH2 domains follow at residues W6–L101 and W111–F205. A Tyrosine-protein phosphatase domain is found at F227 to Y645. Residues I289–T444 are PTPase insert (Cys/Ser-rich). Positions S362–N402 are disordered. Low complexity-rich tracts occupy residues S369 to G378 and T388 to P400. S419 bears the Phosphoserine mark. Substrate-binding positions include D545, C583–R589, and Q630. C583 acts as the Phosphocysteine intermediate in catalysis. The tract at residues D793–G824 is disordered.

Belongs to the protein-tyrosine phosphatase family. Non-receptor class subfamily. Interacts with drpr isoform A. As to expression, expressed uniformly throughout all tissues during embryogenesis.

It localises to the cytoplasm. The catalysed reaction is O-phospho-L-tyrosyl-[protein] + H2O = L-tyrosyl-[protein] + phosphate. In terms of biological role, required in all receptor tyrosine kinase signaling pathways. Functions downstream of the receptor tyrosine kinase torso, acting in concert with D-Raf via tailless. Also functions downstream of Egfr (epidermal growth factor receptor) and btl (fibroblast growth factor receptor). The SH2 domain suggests that csw effects its role by mediating heteromeric protein interactions. Maternally required for normal determination of cell fates at the termini of the embryo. Required for cell fate specification of the ventral ectoderm, in the developing embryonic CNS and for embryonic tracheal cell migration. Functions during imaginal development for proper formation of adult structures such as eyes, aristae, L5 wing vein and the tarsal claw. Dephosphorylates drpr isoform A which is required for the inhibition by drpr isoform A of glial cell engulfment of axonal debris produced following axonal injury. In Drosophila melanogaster (Fruit fly), this protein is Tyrosine-protein phosphatase corkscrew (csw).